The following is a 114-amino-acid chain: MSLPSSRAARVPGPSGSLCALLALLLLLTPPGPLASAGPVSAVLTELRCTCLRVTLRVNPKTIGKLQVFPAGPQCSKVEVVASLKNGKQVCLDPEAPFLKKVIQKILDSGNKKN.

The N-terminal stretch at 1–37 (MSLPSSRAARVPGPSGSLCALLALLLLLTPPGPLASA) is a signal peptide. Cystine bridges form between Cys-49/Cys-75 and Cys-51/Cys-91.

The protein belongs to the intercrine alpha (chemokine CxC) family.

It localises to the secreted. Functionally, chemotactic for neutrophil granulocytes. Signals through binding and activation of its receptors (CXCR1 and CXCR2). In addition to its chemotactic and angiogenic properties, it has strong antibacterial activity against Gram-positive and Gram-negative bacteria (90-fold-higher when compared to CXCL5 and CXCL7). This is C-X-C motif chemokine 6 (CXCL6) from Homo sapiens (Human).